The chain runs to 155 residues: MTEEATTTLSSADIIEIMKLLPHRYPFLMVDKIIEIDGDNAAIGIKNVTVNEPHFTGHFPESPIMPGVLLIEGMAQTAGAICAKKEGQPGNLVYFMTIENARFRKPVVPGDRVEFHVKKHKQRGNIWKFHCDAKVEGALVAEADIGAMIVRKDQA.

The active site involves His58.

The protein belongs to the thioester dehydratase family. FabZ subfamily.

It localises to the cytoplasm. The catalysed reaction is a (3R)-hydroxyacyl-[ACP] = a (2E)-enoyl-[ACP] + H2O. Functionally, involved in unsaturated fatty acids biosynthesis. Catalyzes the dehydration of short chain beta-hydroxyacyl-ACPs and long chain saturated and unsaturated beta-hydroxyacyl-ACPs. This is 3-hydroxyacyl-[acyl-carrier-protein] dehydratase FabZ from Rhizobium etli (strain CIAT 652).